Here is a 342-residue protein sequence, read N- to C-terminus: MTIALTGGGTGGHLAIVRCLLESAIKKNIECVYIGSQNGQDKAWFENEARFKEKFFLSSKGVVNQNKFGKISSLLHTLKLSKDCREIFKKYHIQAVFSVGGYSAAPASFAALFSHLPLFIHEQNSKSGSLNMLLKPFATKFFSAFEKEFSPYPVANKFFDNARIRKELKNIIFLGGSQGAQFINELALNLAPKLQEQNIKIIHQCGKNDFEKCKKHYQSLNIQADVFDFSSNLGEKMKNADLAISRAGASTLFELCANTLPAIFIPYPYATKNHQYFNAKFLQDQALCQIFTQDSINLDDFFKAMLKLNLEDISTRLQNIAQKNGGDILLEKALSNNLAFIR.

Residues T10–G12, N124, S177, and Q275 each bind UDP-N-acetyl-alpha-D-glucosamine.

The protein belongs to the glycosyltransferase 28 family. MurG subfamily.

The protein localises to the cell inner membrane. The catalysed reaction is di-trans,octa-cis-undecaprenyl diphospho-N-acetyl-alpha-D-muramoyl-L-alanyl-D-glutamyl-meso-2,6-diaminopimeloyl-D-alanyl-D-alanine + UDP-N-acetyl-alpha-D-glucosamine = di-trans,octa-cis-undecaprenyl diphospho-[N-acetyl-alpha-D-glucosaminyl-(1-&gt;4)]-N-acetyl-alpha-D-muramoyl-L-alanyl-D-glutamyl-meso-2,6-diaminopimeloyl-D-alanyl-D-alanine + UDP + H(+). It participates in cell wall biogenesis; peptidoglycan biosynthesis. Functionally, cell wall formation. Catalyzes the transfer of a GlcNAc subunit on undecaprenyl-pyrophosphoryl-MurNAc-pentapeptide (lipid intermediate I) to form undecaprenyl-pyrophosphoryl-MurNAc-(pentapeptide)GlcNAc (lipid intermediate II). This is UDP-N-acetylglucosamine--N-acetylmuramyl-(pentapeptide) pyrophosphoryl-undecaprenol N-acetylglucosamine transferase from Campylobacter jejuni subsp. doylei (strain ATCC BAA-1458 / RM4099 / 269.97).